The chain runs to 124 residues: MPTISQLIGSERKRLTRKTKSPALKSCPERRGVCTRVYTSTPKKPNSALRKVARVRLTSGFEVTAYIPGIGHNLQEHSVVLLRGGRVKDLPGVRYHIIRGTLDTAGVKDRRQSRSKYGAKAPKD.

Residues 1–28 form a disordered region; that stretch reads MPTISQLIGSERKRLTRKTKSPALKSCP. Aspartate 89 is modified (3-methylthioaspartic acid). The segment at 104 to 124 is disordered; that stretch reads TAGVKDRRQSRSKYGAKAPKD.

Belongs to the universal ribosomal protein uS12 family. In terms of assembly, part of the 30S ribosomal subunit. Contacts proteins S8 and S17. May interact with IF1 in the 30S initiation complex.

With S4 and S5 plays an important role in translational accuracy. In terms of biological role, interacts with and stabilizes bases of the 16S rRNA that are involved in tRNA selection in the A site and with the mRNA backbone. Located at the interface of the 30S and 50S subunits, it traverses the body of the 30S subunit contacting proteins on the other side and probably holding the rRNA structure together. The combined cluster of proteins S8, S12 and S17 appears to hold together the shoulder and platform of the 30S subunit. In Prochlorococcus marinus (strain MIT 9312), this protein is Small ribosomal subunit protein uS12.